A 432-amino-acid polypeptide reads, in one-letter code: Nematocyst expressed protein 3-like (432 aa).

The N-terminal stretch at 1 to 19 is a signal peptide; the sequence is MRVVYLVLVVAVIIAITEA. Intrachain disulfides connect cysteine 52/cysteine 91, cysteine 59/cysteine 84, cysteine 73/cysteine 88, cysteine 125/cysteine 140, cysteine 157/cysteine 176, and cysteine 166/cysteine 180. ShKT domains follow at residues 59–91, 107–143, and 149–183; these read CKAFGKIAKKDKKSCFNNPDKARMACPVSCKLC, VVRAMCVDIEVDQCNPDVCYTNPDWATENCRKTCMLC, and GPCDTDPRCPFWGQYGYCSTATYIDNHCPYNCDVY. Positions 235–313 are enriched in low complexity; it reads GAQYPAATAA…PEAAPSEPEA (79 aa). Residues 235-432 are disordered; it reads GAQYPAATAA…KSKSGHKRHH (198 aa). Pro residues predominate over residues 314 to 330; the sequence is APAPAPEMAPAPAPEMA. Positions 331–408 are enriched in low complexity; sequence PAPEAASAPA…AAPSEQPMPG (78 aa). Residues 409–432 are compositionally biased toward basic residues; it reads KKSKSKPSKRKGVKKSKSGHKRHH.

It belongs to the NEP3 family. As to expression, nematocytes. In late planulae, transcripts are found throughout the ectoderm in nematocytes, with high concentration of expressing cells in the oral pole. In primary polyps, is expressed in nematocytes in the body wall and physa ectoderm and in the upper and lower pharynx.

The protein localises to the nematocyst. Its subcellular location is the secreted. Its function is as follows. Probable toxin. The polypeptide is Nematocyst expressed protein 3-like (Nematostella vectensis (Starlet sea anemone)).